Reading from the N-terminus, the 404-residue chain is MSRRSSRLQAKQQPQPSQTESPQEAQIIQAKKRKTTQDVKKRREEVTKKHQYEIRNCWPPVLSGGISPCIIIETPHKEIGTSDFSRFTNYRFKNLFINPSPLPDLSWGCSKEVWLNMLKKESRYVHDKHFEVLHSDLEPQMRSILLDWLLEVCEVYTLHRETFYLAQDFFDRFMLTQKDINKNMLQLIGITSLFIASKLEEIYAPKLQEFAYVTDGACSEEDILRMELIILKALKWELCPVTIISWLNLFLQVDALKDAPKVLLPQYSQETFIQIAQLLDLCILAIDSLEFQYRILTAAALCHFTSIEVVKKASGLEWDSISECVDWMVPFVNVVKSTSPVKLKTFKKIPMEDRHNIQTHTNYLAMLEEVNYINTFRKGGQLSPVCNGGIMTPPKSTEKPPGKH.

A disordered region spans residues 1 to 44 (MSRRSSRLQAKQQPQPSQTESPQEAQIIQAKKRKTTQDVKKRRE). Positions 12–26 (QQPQPSQTESPQEAQ) are enriched in low complexity. Ser-21 is subject to Phosphoserine. A compositionally biased stretch (basic and acidic residues) spans 35–44 (TTQDVKKRRE). Residue Lys-348 is modified to N6-lactoyllysine. Position 383 is a phosphoserine (Ser-383). Phosphothreonine is present on Thr-392.

The protein belongs to the cyclin family. Cyclin E subfamily. Interacts with the CDK2 (in vivo) and CDK3 (in vitro) protein kinases to form a serine/threonine kinase holoenzyme complex. The cyclin subunit imparts substrate specificity to the complex. Post-translationally, phosphorylation by CDK2 triggers its release from CDK2 and degradation via the ubiquitin proteasome pathway. Lactylated at Lys-348. Delactylated by SIRT3. According to PubMed:9858585, highest levels of expression in adult testis, thymus and brain. Lower levels in placenta, spleen and colon. Consistently elevated levels in tumor-derived cells compared to non-transformed proliferating cells. According to PubMed:9840927: low levels in thymus, prostate, brain, skeletal muscle, and kidney. Elevated levels in lung. According to PubMed:9840943 highly expressed in testis, placenta, thymus and brain. In a lesser extent in small intestine and colon.

The protein resides in the nucleus. In terms of biological role, essential for the control of the cell cycle at the late G1 and early S phase. This is G1/S-specific cyclin-E2 (CCNE2) from Homo sapiens (Human).